We begin with the raw amino-acid sequence, 446 residues long: Phosphoglucosamine mutase (446 aa).

The active-site Phosphoserine intermediate is serine 103. Serine 103, aspartate 242, aspartate 244, and aspartate 246 together coordinate Mg(2+). Serine 103 is subject to Phosphoserine.

Belongs to the phosphohexose mutase family. Mg(2+) serves as cofactor. Post-translationally, activated by phosphorylation.

It catalyses the reaction alpha-D-glucosamine 1-phosphate = D-glucosamine 6-phosphate. Functionally, catalyzes the conversion of glucosamine-6-phosphate to glucosamine-1-phosphate. This is Phosphoglucosamine mutase from Vibrio cholerae serotype O1 (strain ATCC 39541 / Classical Ogawa 395 / O395).